The chain runs to 99 residues: UPF0729 protein CG18508 (99 aa).

The interval 60 to 99 (PGGKKTENVSDDDAEESENPPLNATAMAAETEVDESKKEI) is disordered. The span at 68–77 (VSDDDAEESE) shows a compositional bias: acidic residues. S69 is modified (phosphoserine).

The protein belongs to the UPF0729 family.

The sequence is that of UPF0729 protein CG18508 from Drosophila melanogaster (Fruit fly).